Reading from the N-terminus, the 527-residue chain is DNA polymerase epsilon subunit 2 (527 aa).

The protein belongs to the DNA polymerase epsilon subunit B family. Component of the DNA polymerase epsilon complex consisting of four subunits: the catalytic subunit POLE and the accessory subunits POLE2, POLE3 and POLE4.

The protein localises to the nucleus. Its function is as follows. Accessory component of the DNA polymerase epsilon complex. Participates in DNA repair and in chromosomal DNA replication. The polypeptide is DNA polymerase epsilon subunit 2 (POLE2) (Bos taurus (Bovine)).